The sequence spans 246 residues: Putative pectinesterase 57 (246 aa).

N-linked (GlcNAc...) asparagine glycans are attached at residues Asn-127 and Asn-143. Residue Thr-152 participates in substrate binding. An N-linked (GlcNAc...) asparagine glycan is attached at Asn-174. The Proton donor role is filled by Asp-205. Asp-226 serves as the catalytic Nucleophile.

This sequence belongs to the pectinesterase family.

The enzyme catalyses [(1-&gt;4)-alpha-D-galacturonosyl methyl ester](n) + n H2O = [(1-&gt;4)-alpha-D-galacturonosyl](n) + n methanol + n H(+). The protein operates within glycan metabolism; pectin degradation; 2-dehydro-3-deoxy-D-gluconate from pectin: step 1/5. Its function is as follows. Acts in the modification of cell walls via demethylesterification of cell wall pectin. The polypeptide is Putative pectinesterase 57 (PME57) (Arabidopsis thaliana (Mouse-ear cress)).